The following is a 480-amino-acid chain: MIQVLLITICLAVFPFQGSSIVLDSGNLNEFEVVYPEKVTALPRAAVKNKYEDAMQYEFKVNGEPLLLHLERNKGLFSDDYSEIHYSPDAREISAYPSVEDHCFYHGRVENDADSTASLSACDGLKAHFKIQGEMYLIEPLEVSDTDAHAVFKYENVEKEDEPPKMCGVTQNWESYESTKKASQLNVSPDQQRFPQRFIKLAIYVDHGMYTKYAGNSERITKRVHQMINNINMMCRALNIVTSLSVLRIWSEKDLITVNASAPSSLTLFGAWRETVLLNRTSHDHAQLMTATIFNGNVIGRAPVGGMCDPKRSVAIVRDHNAILFIVAVTMTHEMGHNLGMHHDEDKCNCNTCIMSKVLSRQPSYEFSDCNENEYQTYVTDHSPQCILNDPLRPDTVSTPVSGNELLEAGEECDCGSPGNPCCDAATCKLRQGAQCAEGLCCDQCRFMKKGTVCRIARGDDMDDYCNGISAGCPRNPFHA.

Residues 1–20 (MIQVLLITICLAVFPFQGSS) form the signal peptide. Positions 21-190 (IVLDSGNLNE…KASQLNVSPD (170 aa)) are excised as a propeptide. In terms of domain architecture, Peptidase M12B spans 197-391 (RFIKLAIYVD…HSPQCILNDP (195 aa)). N-linked (GlcNAc...) asparagine glycosylation is found at Asn-259 and Asn-279. Disulfide bonds link Cys-308–Cys-386, Cys-348–Cys-370, Cys-350–Cys-353, Cys-413–Cys-428, Cys-415–Cys-423, Cys-422–Cys-445, Cys-436–Cys-442, Cys-441–Cys-466, and Cys-454–Cys-473. Position 333 (His-333) interacts with Zn(2+). Residue Glu-334 is part of the active site. Zn(2+) is bound by residues His-337 and His-343. Residues 399-480 (TPVSGNELLE…AGCPRNPFHA (82 aa)) enclose the Disintegrin domain. A Cell attachment site motif is present at residues 458–460 (RGD).

It belongs to the venom metalloproteinase (M12B) family. P-II subfamily. P-IIa sub-subfamily. As to quaternary structure, monomer. Zn(2+) serves as cofactor. In terms of tissue distribution, expressed by the venom gland.

The protein resides in the secreted. In terms of biological role, impairs hemostasis in the envenomed animal. Functionally, inhibits platelet aggregation and bone resorption. The polypeptide is Zinc metalloproteinase/disintegrin (Gloydius halys (Chinese water mocassin)).